The sequence spans 498 residues: ATP synthase subunit beta, chloroplastic (498 aa).

172–179 contributes to the ATP binding site; sequence GGAGVGKT.

This sequence belongs to the ATPase alpha/beta chains family. F-type ATPases have 2 components, CF(1) - the catalytic core - and CF(0) - the membrane proton channel. CF(1) has five subunits: alpha(3), beta(3), gamma(1), delta(1), epsilon(1). CF(0) has four main subunits: a(1), b(1), b'(1) and c(9-12).

The protein resides in the plastid. The protein localises to the chloroplast thylakoid membrane. It carries out the reaction ATP + H2O + 4 H(+)(in) = ADP + phosphate + 5 H(+)(out). In terms of biological role, produces ATP from ADP in the presence of a proton gradient across the membrane. The catalytic sites are hosted primarily by the beta subunits. In Jasminum nudiflorum (Winter jasmine), this protein is ATP synthase subunit beta, chloroplastic.